The primary structure comprises 492 residues: Probable cobyric acid synthase (492 aa).

The region spanning 252-444 is the GATase cobBQ-type domain; it reads PIEVNIVKFS…FHGILENFEF (193 aa). The Nucleophile role is filled by C330. The active site involves H436.

The protein belongs to the CobB/CobQ family. CobQ subfamily.

It participates in cofactor biosynthesis; adenosylcobalamin biosynthesis. Catalyzes amidations at positions B, D, E, and G on adenosylcobyrinic A,C-diamide. NH(2) groups are provided by glutamine, and one molecule of ATP is hydrogenolyzed for each amidation. The sequence is that of Probable cobyric acid synthase from Methanococcus maripaludis (strain C6 / ATCC BAA-1332).